Consider the following 28-residue polypeptide: Dermaseptin-2 (28 aa).

Residue Gln28 is modified to Glutamine amide.

This sequence belongs to the frog skin active peptide (FSAP) family. Dermaseptin subfamily. As to expression, expressed by the skin glands.

The protein localises to the secreted. Antimicrobial peptide with activity against the Gram-positive bacterium S.aureus, and the Gram-negative bacteria E.coli and P.aeruginosa. Probably acts by disturbing membrane functions with its amphipathic structure. Has an activity of stimulation of insulin release, which may protect the species from being eaten by predators by causing fatal hypoglycemia. Has hemolytic activity (60% hemolysis at 128 ug/ml). The sequence is that of Dermaseptin-2 from Phyllomedusa tarsius (Brownbelly leaf frog).